The following is a 473-amino-acid chain: Vasculin (473 aa).

Disordered stretches follow at residues M1 to N25, R44 to P170, and S186 to R341. S49 is modified (phosphoserine). Omega-N-methylarginine is present on R87. Residues N94 to D117 show a composition bias toward polar residues. The span at E119 to E133 shows a compositional bias: basic and acidic residues. Polar residues-rich tracts occupy residues N193–G204 and N248–R286. A phosphoserine mark is found at S274, S276, S322, and S381. Basic and acidic residues predominate over residues M293–F329. Residues T450–V473 are disordered. Positions E456 to V473 are enriched in acidic residues.

It belongs to the vasculin family. In terms of assembly, interacts with GTF2B, GTF2F2, RNA polymerase II and TBP. In terms of tissue distribution, ubiquitously expressed (at protein level).

The protein localises to the nucleus. Functionally, functions as a GC-rich promoter-specific transactivating transcription factor. This Mus musculus (Mouse) protein is Vasculin (Gpbp1).